The chain runs to 127 residues: Large ribosomal subunit protein uL22 (127 aa).

Belongs to the universal ribosomal protein uL22 family. In terms of assembly, part of the 50S ribosomal subunit.

This protein binds specifically to 23S rRNA; its binding is stimulated by other ribosomal proteins, e.g. L4, L17, and L20. It is important during the early stages of 50S assembly. It makes multiple contacts with different domains of the 23S rRNA in the assembled 50S subunit and ribosome. In terms of biological role, the globular domain of the protein is located near the polypeptide exit tunnel on the outside of the subunit, while an extended beta-hairpin is found that lines the wall of the exit tunnel in the center of the 70S ribosome. This is Large ribosomal subunit protein uL22 from Brucella suis (strain ATCC 23445 / NCTC 10510).